A 90-amino-acid polypeptide reads, in one-letter code: Large ribosomal subunit protein bL27 (90 aa).

It belongs to the bacterial ribosomal protein bL27 family.

The polypeptide is Large ribosomal subunit protein bL27 (Rhodopseudomonas palustris (strain BisB5)).